Consider the following 192-residue polypeptide: Potassium-transporting ATPase KdpC subunit (192 aa).

A helical membrane pass occupies residues 14–34 (LTGVLVVLCGLIYPAMVTGIA).

Belongs to the KdpC family. As to quaternary structure, the system is composed of three essential subunits: KdpA, KdpB and KdpC.

It is found in the cell membrane. Part of the high-affinity ATP-driven potassium transport (or Kdp) system, which catalyzes the hydrolysis of ATP coupled with the electrogenic transport of potassium into the cytoplasm. This subunit acts as a catalytic chaperone that increases the ATP-binding affinity of the ATP-hydrolyzing subunit KdpB by the formation of a transient KdpB/KdpC/ATP ternary complex. The chain is Potassium-transporting ATPase KdpC subunit from Bacillus cytotoxicus (strain DSM 22905 / CIP 110041 / 391-98 / NVH 391-98).